The sequence spans 833 residues: Translation initiation factor IF-2 (833 aa).

The tr-type G domain occupies 331–501; sequence TRAPVVTVMG…LLIAEMQDLK (171 aa). Residues 340 to 347 are G1; sequence GHVDHGKT. 340 to 347 contributes to the GTP binding site; sequence GHVDHGKT. Residues 365–369 form a G2 region; the sequence is GITQH. The segment at 387 to 390 is G3; the sequence is DTPG. GTP is bound by residues 387–391 and 441–444; these read DTPGH and NKID. A G4 region spans residues 441-444; that stretch reads NKID. The tract at residues 477–479 is G5; sequence SAL.

The protein belongs to the TRAFAC class translation factor GTPase superfamily. Classic translation factor GTPase family. IF-2 subfamily.

It is found in the cytoplasm. Functionally, one of the essential components for the initiation of protein synthesis. Protects formylmethionyl-tRNA from spontaneous hydrolysis and promotes its binding to the 30S ribosomal subunits. Also involved in the hydrolysis of GTP during the formation of the 70S ribosomal complex. The protein is Translation initiation factor IF-2 of Rickettsia canadensis (strain McKiel).